Here is a 355-residue protein sequence, read N- to C-terminus: uncharacterized protein (355 aa).

Residue 58–65 coordinates ATP; that stretch reads GYIIFGIK.

This is an uncharacterized protein from Ureaplasma parvum serovar 3 (strain ATCC 700970).